An 87-amino-acid polypeptide reads, in one-letter code: Large ribosomal subunit protein bL27 (87 aa).

The segment at 1–21 (MAHKKAGGSSRNGRDSESKRL) is disordered.

The protein belongs to the bacterial ribosomal protein bL27 family.

The sequence is that of Large ribosomal subunit protein bL27 from Burkholderia mallei (strain NCTC 10247).